Here is a 159-residue protein sequence, read N- to C-terminus: Large ribosomal subunit protein mL50 (159 aa).

This sequence belongs to the mitochondrion-specific ribosomal protein mL50 family. As to quaternary structure, component of the mitochondrial ribosome large subunit (39S) which comprises a 16S rRNA and about 50 distinct proteins.

It is found in the mitochondrion. This chain is Large ribosomal subunit protein mL50 (Mrpl50), found in Mus musculus (Mouse).